The primary structure comprises 587 residues: ATP-dependent lipid A-core flippase (587 aa).

The next 5 membrane-spanning stretches (helical) occupy residues 31 to 51 (LIVS…LIYL), 68 to 88 (LKMM…TNFI), 145 to 165 (GSLI…AVMF), 166 to 186 (YTSW…AVLI), and 259 to 279 (VQVI…TPLI). One can recognise an ABC transmembrane type-1 domain in the interval 32-315 (IVSGVALVFN…LTAVNAQFQS (284 aa)). The ABC transporter domain occupies 347-583 (LEFKNVSFAY…NGAYKQLHSM (237 aa)). An ATP-binding site is contributed by 381 to 388 (GRSGSGKS).

The protein belongs to the ABC transporter superfamily. Lipid exporter (TC 3.A.1.106) family. In terms of assembly, homodimer.

The protein localises to the cell inner membrane. It catalyses the reaction ATP + H2O + lipid A-core oligosaccharideSide 1 = ADP + phosphate + lipid A-core oligosaccharideSide 2.. Involved in lipopolysaccharide (LPS) biosynthesis. Translocates lipid A-core from the inner to the outer leaflet of the inner membrane. Transmembrane domains (TMD) form a pore in the inner membrane and the ATP-binding domain (NBD) is responsible for energy generation. This chain is ATP-dependent lipid A-core flippase, found in Haemophilus influenzae (strain ATCC 51907 / DSM 11121 / KW20 / Rd).